The primary structure comprises 320 residues: Aminoacyl tRNA synthase complex-interacting multifunctional protein 2 (320 aa).

Positions 82–162 are interaction with PRKN; sequence TPDADLDVTN…HTHSSVKSVP (81 aa). The interval 162-225 is interaction with TP53; that stretch reads PENLLKCFGE…FLFSLFGQKH (64 aa). The GST C-terminal domain occupies 220–317; sequence LFGQKHNAVN…NLAPFNTALK (98 aa).

In terms of assembly, part of the multisynthetase complex (MSC), a multisubunit complex that groups tRNA ligases for Arg (RARS1), Asp (DARS1), Gln (QARS1), Ile (IARS1), Leu (LARS1), Lys (KARS1), Met (MARS1) the bifunctional ligase for Glu and Pro (EPRS1) and the auxiliary subunits AIMP1/p43, AIMP2/p38 and EEF1E1/p18. Interacts (via N-terminus) with KARS1. Interacts with EPRS1. Forms a linear complex that contains MARS1, EEF1E1, EPRS1 and AIMP2 that is at the core of the multisubunit complex. Binds FUBP1 (via C-terminus). Interacts in both its unphosphorylated and phosphorylated forms with p53/TP53 (via N-terminus) in the nucleus following UV irradiation. Interacts (via N-terminus) with PRKN/parkin (via first RING-type domain). Interacts with TARS3. In terms of processing, phosphorylated on serine residues in response to UV irradiation. Post-translationally, ubiquitinated by PRKN, leading to its degradation by the proteasome. Mutant PRKN fails to ubiquitinate AIMP2 efficiently, allowing its accumulation which may contribute to neurodegeneration associated with Parkinson disease.

Its subcellular location is the cytoplasm. It is found in the cytosol. The protein localises to the nucleus. In terms of biological role, required for assembly and stability of the aminoacyl-tRNA synthase complex. Mediates ubiquitination and degradation of FUBP1, a transcriptional activator of MYC, leading to MYC down-regulation which is required for aveolar type II cell differentiation. Blocks MDM2-mediated ubiquitination and degradation of p53/TP53. Functions as a proapoptotic factor. The polypeptide is Aminoacyl tRNA synthase complex-interacting multifunctional protein 2 (AIMP2) (Homo sapiens (Human)).